Consider the following 683-residue polypeptide: U4/U6 small nuclear ribonucleoprotein Prp3 (683 aa).

Positions 1 to 87 constitute a PWI domain; it reads MALSKRELDE…HSKSSSDRSR (87 aa). Residues 73–107 are compositionally biased toward basic and acidic residues; sequence GRSSRHSKSSSDRSRKRELKEVFGDDSEISKESSG. Residues 73–135 are disordered; the sequence is GRSSRHSKSS…IPGPPSESPG (63 aa). Residue K139 forms a Glycyl lysine isopeptide (Lys-Gly) (interchain with G-Cter in SUMO2) linkage. Positions 161 to 183 are disordered; sequence SFISPPAPQPKTPSSSQPERLPI. A Phosphoserine modification is found at S164. Glycyl lysine isopeptide (Lys-Gly) (interchain with G-Cter in SUMO2) cross-links involve residues K244 and K252. The tract at residues 416-550 is mediates interaction with SART3; sequence NLVEHPAQLN…VHISVYRVRN (135 aa). S619 bears the Phosphoserine mark.

Component of the precatalytic spliceosome (spliceosome B complex). Component of the U4/U6-U5 tri-snRNP complex, a building block of the precatalytic spliceosome (spliceosome B complex). The U4/U6-U5 tri-snRNP complex is composed of the U4, U6 and U5 snRNAs and at least PRPF3, PRPF4, PRPF6, PRPF8, PRPF31, SNRNP200, TXNL4A, SNRNP40, SNRPB, SNRPD1, SNRPD2, SNRPD3, SNRPE, SNRPF, SNRPG, DDX23, CD2BP2, PPIH, SNU13, EFTUD2, SART1 and USP39, plus LSM2, LSM3, LSM4, LSM5, LSM6, LSM7 and LSM8. Interacts directly with PRPF4. Part of a heteromeric complex containing PPIH, PRPF3 and PRPF4 that is stable in the absence of RNA. Interacts with SART3; the interaction is direct and recruits the deubiquitinase USP4 to PRPF3. Interacts with PRPF19. Interacts ('Lys-63'-linked polyubiquitinated) with PRPF8 (via the MPN (JAB/Mov34) domain); may stabilize the U4/U6-U5 tri-snRNP complex. Interacts with ERCC6. Ubiquitinated. Undergoes 'Lys-63'-linked polyubiquitination by PRPF19 and deubiquitination by USP4. 'Lys-63'-linked ubiquitination increases the affinity for PRPF8 and may regulate the assembly of the U4/U6-U5 tri-snRNP complex.

The protein resides in the nucleus. The protein localises to the nucleus speckle. Functionally, plays a role in pre-mRNA splicing as component of the U4/U6-U5 tri-snRNP complex that is involved in spliceosome assembly, and as component of the precatalytic spliceosome (spliceosome B complex). The polypeptide is U4/U6 small nuclear ribonucleoprotein Prp3 (Prpf3) (Mus musculus (Mouse)).